The following is a 218-amino-acid chain: Glutathione S-transferase class-mu 26 kDa isozyme (218 aa).

Positions methionine 1–glycine 83 constitute a GST N-terminal domain. Residues tyrosine 7–tryptophan 8, tryptophan 41–lysine 45, asparagine 54–leucine 55, and glutamine 67–serine 68 contribute to the glutathione site. The region spanning cysteine 85–leucine 203 is the GST C-terminal domain. Position 111 (tyrosine 111) interacts with substrate.

The protein belongs to the GST superfamily. Mu family. Homodimer. In terms of tissue distribution, tegument and in subtegumentary parenchymal cells. GST 26 may be actively excreted by adult worms.

The catalysed reaction is RX + glutathione = an S-substituted glutathione + a halide anion + H(+). Its function is as follows. Conjugation of reduced glutathione to a wide number of exogenous and endogenous hydrophobic electrophiles. In terms of biological role, GST isoenzymes appear to play a central role in the parasite detoxification system. Other functions are also suspected including a role in increasing the solubility of haematin in the parasite gut. The protein is Glutathione S-transferase class-mu 26 kDa isozyme of Schistosoma mansoni (Blood fluke).